The sequence spans 868 residues: LPS-assembly protein LptD (868 aa).

The first 24 residues, 1 to 24 (MLKGIHKYLLMCFGTVLFTVQANA), serve as a signal peptide directing secretion.

The protein belongs to the LptD family. In terms of assembly, component of the lipopolysaccharide transport and assembly complex. Interacts with LptE and LptA.

It localises to the cell outer membrane. Together with LptE, is involved in the assembly of lipopolysaccharide (LPS) at the surface of the outer membrane. In Francisella tularensis subsp. holarctica (strain LVS), this protein is LPS-assembly protein LptD.